The chain runs to 572 residues: Proline--tRNA ligase (572 aa).

Belongs to the class-II aminoacyl-tRNA synthetase family. ProS type 1 subfamily. As to quaternary structure, homodimer.

It is found in the cytoplasm. It carries out the reaction tRNA(Pro) + L-proline + ATP = L-prolyl-tRNA(Pro) + AMP + diphosphate. Functionally, catalyzes the attachment of proline to tRNA(Pro) in a two-step reaction: proline is first activated by ATP to form Pro-AMP and then transferred to the acceptor end of tRNA(Pro). As ProRS can inadvertently accommodate and process non-cognate amino acids such as alanine and cysteine, to avoid such errors it has two additional distinct editing activities against alanine. One activity is designated as 'pretransfer' editing and involves the tRNA(Pro)-independent hydrolysis of activated Ala-AMP. The other activity is designated 'posttransfer' editing and involves deacylation of mischarged Ala-tRNA(Pro). The misacylated Cys-tRNA(Pro) is not edited by ProRS. In Salmonella choleraesuis (strain SC-B67), this protein is Proline--tRNA ligase.